A 127-amino-acid polypeptide reads, in one-letter code: uncharacterized protein (127 aa).

The next 2 helical transmembrane spans lie at 48–68 (LYSL…PLSI) and 83–103 (VFLF…CLID).

It is found in the membrane. This is an uncharacterized protein from Saccharomyces cerevisiae (strain ATCC 204508 / S288c) (Baker's yeast).